The sequence spans 306 residues: Secretory carrier-associated membrane protein 1 (306 aa).

Positions 1 to 66 are disordered; sequence MAGRYDSNPF…LPPEPAAFGA (66 aa). The Cytoplasmic portion of the chain corresponds to 1–141; it reads MAGRYDSNPF…EIPSHLQRMQ (141 aa). Residues 25–36 show a composition bias toward gly residues; sequence KAGGQPSYGGGA. Residues 40–55 are compositionally biased toward low complexity; sequence PNPRNVPSVSSNSRLS. Residues 72-109 adopt a coiled-coil conformation; it reads LDSSKDLKNREKELQAREAELNKREKELKRREEAAARA. 4 helical membrane passes run 142 to 162, 174 to 194, 209 to 229, and 257 to 277; these read YVAF…VIAV, IWLL…VLWY, FGLF…SAVA, and IFYF…IWVI. Over 278 to 306 the chain is Cytoplasmic; sequence QQVYMYFRGSGKAAEMKRDATRGAMRAAF.

This sequence belongs to the SCAMP family.

The protein resides in the cell membrane. The protein localises to the cytoplasmic vesicle. Its subcellular location is the secretory vesicle membrane. Its function is as follows. Probably involved in membrane trafficking. The chain is Secretory carrier-associated membrane protein 1 (SCAMP1) from Oryza sativa subsp. japonica (Rice).